The sequence spans 61 residues: Cobrotoxin-c (61 aa).

4 cysteine pairs are disulfide-bonded: Cys3–Cys23, Cys17–Cys40, Cys42–Cys53, and Cys54–Cys59.

This sequence belongs to the three-finger toxin family. Short-chain subfamily. Type I alpha-neurotoxin sub-subfamily. As to expression, expressed by the venom gland.

The protein localises to the secreted. Produces peripheral paralysis by blocking neuromuscular transmission at the postsynaptic site. Binds to the nicotinic acetylcholine receptor. This chain is Cobrotoxin-c, found in Naja kaouthia (Monocled cobra).